We begin with the raw amino-acid sequence, 375 residues long: Growth/differentiation factor 8 (375 aa).

An N-terminal signal peptide occupies residues 1-23 (MQKLQLCVYIYLFMLIVAGPVDL). The propeptide occupies 24-266 (NENSEQKENV…VTDTPKRSRR (243 aa)). Residue Asn-71 is glycosylated (N-linked (GlcNAc...) asparagine). 4 disulfides stabilise this stretch: Cys-272–Cys-282, Cys-281–Cys-340, Cys-309–Cys-372, and Cys-313–Cys-374.

It belongs to the TGF-beta family. In terms of assembly, homodimer; disulfide-linked. Interacts with WFIKKN2, leading to inhibit its activity. Interacts with FSTL3. In terms of processing, synthesized as large precursor molecule that undergoes proteolytic cleavage to generate an N-terminal propeptide and a disulfide linked C-terminal dimer, which is the biologically active molecule. The circulating form consists of a latent complex of the C-terminal dimer and other proteins, including its propeptide, which maintain the C-terminal dimer in a latent, inactive state. Ligand activation requires additional cleavage of the prodomain by a tolloid-like metalloproteinase.

It localises to the secreted. Functionally, acts specifically as a negative regulator of skeletal muscle growth. This chain is Growth/differentiation factor 8 (MSTN), found in Pan paniscus (Pygmy chimpanzee).